The chain runs to 1470 residues: ABC transporter G family member 48 (1470 aa).

A disordered region spans residues 1 to 47 (MAAAPSASGRRSMSWGSSISQSFRQAEADDPFGRAASQQGHDDDEEN). Residues 9–24 (GRRSMSWGSSISQSFR) are compositionally biased toward polar residues. In terms of domain architecture, ABC transporter 1 spans 172-445 (GLIGRFGSSN…FENAGFRCPE (274 aa)). Residue 205–212 (GPPSSGKS) coordinates ATP. An ABC transmembrane type-2 1 domain is found at 523–736 (ESLRAVMSRE…SQQAISINEF (214 aa)). The next 6 helical transmembrane spans lie at 541–561 (FIYI…MTVF), 577–597 (FLGA…AELQ), 629–649 (VPVS…VMGF), 660–680 (FIAF…LGAI), 686–706 (VANT…GFLI), and 772–792 (FWIS…LYIL). The segment at 828–852 (QIVHNNGASNTSATSSIPMSGSRST) is disordered. Residues 832–843 (NNGASNTSATSS) are compositionally biased toward low complexity. In terms of domain architecture, ABC transporter 2 spans 869–1121 (LCFNHVNYYV…KLVEYFEAVP (253 aa)). 914 to 921 (GVSGAGKT) provides a ligand contact to ATP. In terms of domain architecture, ABC transmembrane type-2 2 spans 1194-1408 (SQCIANFWKQ…TIYGVVASQF (215 aa)). 7 helical membrane-spanning segments follow: residues 1215–1234 (AMRY…VFWQ), 1249–1271 (LGAT…QPVV), 1301–1321 (VIYN…MIGY), 1331–1351 (FMFF…MLVA), 1359–1379 (ANIL…FLVV), 1389–1409 (WYYW…SQFG), and 1439–1459 (FLGY…FIFG).

This sequence belongs to the ABC transporter superfamily. ABCG family. PDR (TC 3.A.1.205) subfamily.

It localises to the membrane. Its function is as follows. May be a general defense protein. The sequence is that of ABC transporter G family member 48 from Oryza sativa subsp. japonica (Rice).